Consider the following 326-residue polypeptide: Vitamin B12 import system permease protein BtuC (326 aa).

Transmembrane regions (helical) follow at residues tryptophan 15–glutamate 35, leucine 61–phenylalanine 81, proline 88–glycine 108, leucine 112–leucine 132, leucine 146–phenylalanine 166, glycine 184–isoleucine 204, glycine 240–isoleucine 260, valine 274–alanine 294, and glutamate 302–leucine 322.

The protein belongs to the binding-protein-dependent transport system permease family. FecCD subfamily. As to quaternary structure, the complex is composed of two ATP-binding proteins (BtuD), two transmembrane proteins (BtuC) and a solute-binding protein (BtuF).

Its subcellular location is the cell inner membrane. Functionally, part of the ABC transporter complex BtuCDF involved in vitamin B12 import. Involved in the translocation of the substrate across the membrane. In Salmonella choleraesuis (strain SC-B67), this protein is Vitamin B12 import system permease protein BtuC.